A 113-amino-acid polypeptide reads, in one-letter code: Nucleoid-associated protein EUBREC_0329 (113 aa).

Residues 1–12 are compositionally biased toward gly residues; that stretch reads MARRGGFPGGMP. Residues 1-45 are disordered; the sequence is MARRGGFPGGMPGNMNNLMKQAQKMQRQMEEAQKQLEDAEVTAKA. Residues 27 to 37 show a composition bias toward basic and acidic residues; sequence RQMEEAQKQLE.

This sequence belongs to the YbaB/EbfC family. Homodimer.

It is found in the cytoplasm. The protein localises to the nucleoid. Functionally, binds to DNA and alters its conformation. May be involved in regulation of gene expression, nucleoid organization and DNA protection. The polypeptide is Nucleoid-associated protein EUBREC_0329 (Agathobacter rectalis (strain ATCC 33656 / DSM 3377 / JCM 17463 / KCTC 5835 / VPI 0990) (Eubacterium rectale)).